The sequence spans 329 residues: Glycerol-3-phosphate dehydrogenase [NAD(P)+] (329 aa).

NADPH-binding residues include tryptophan 11 and lysine 101. Residues lysine 101, glycine 132, and serine 134 each contribute to the sn-glycerol 3-phosphate site. Alanine 136 lines the NADPH pocket. Positions 188, 241, 251, 252, and 253 each coordinate sn-glycerol 3-phosphate. Lysine 188 acts as the Proton acceptor in catalysis. Arginine 252 contacts NADPH. 2 residues coordinate NADPH: valine 276 and glutamate 278.

Belongs to the NAD-dependent glycerol-3-phosphate dehydrogenase family.

Its subcellular location is the cytoplasm. The catalysed reaction is sn-glycerol 3-phosphate + NAD(+) = dihydroxyacetone phosphate + NADH + H(+). The enzyme catalyses sn-glycerol 3-phosphate + NADP(+) = dihydroxyacetone phosphate + NADPH + H(+). Its pathway is membrane lipid metabolism; glycerophospholipid metabolism. Functionally, catalyzes the reduction of the glycolytic intermediate dihydroxyacetone phosphate (DHAP) to sn-glycerol 3-phosphate (G3P), the key precursor for phospholipid synthesis. The protein is Glycerol-3-phosphate dehydrogenase [NAD(P)+] of Phytoplasma australiense.